Reading from the N-terminus, the 516-residue chain is Extracellular endo-inulinase inuB (516 aa).

Positions 1-25 (MLNPKVAYMVWMTCLGLTLPSQAQS) are cleaved as a signal peptide. Residues 40–43 (WMNE), glutamine 59, tryptophan 67, and 99–100 (FT) contribute to the substrate site. The active site involves glutamate 43. Asparagine 109 carries an N-linked (GlcNAc...) asparagine glycan. Residues 175-176 (RD) and glutamate 233 each bind substrate. N-linked (GlcNAc...) asparagine glycans are attached at residues asparagine 372, asparagine 419, and asparagine 424.

It belongs to the glycosyl hydrolase 32 family.

Its subcellular location is the secreted. The enzyme catalyses Endohydrolysis of (2-&gt;1)-beta-D-fructosidic linkages in inulin.. Functionally, endo-inulinase involved in utilization of the plant storage polymer inulin, consisting of fructooligosaccharides with a degree of polymerization (DP) value from 2 to 60. This is Extracellular endo-inulinase inuB (inuB) from Aspergillus niger.